We begin with the raw amino-acid sequence, 113 residues long: Large ribosomal subunit protein uL22 (113 aa).

This sequence belongs to the universal ribosomal protein uL22 family. Part of the 50S ribosomal subunit.

Functionally, this protein binds specifically to 23S rRNA; its binding is stimulated by other ribosomal proteins, e.g. L4, L17, and L20. It is important during the early stages of 50S assembly. It makes multiple contacts with different domains of the 23S rRNA in the assembled 50S subunit and ribosome. Its function is as follows. The globular domain of the protein is located near the polypeptide exit tunnel on the outside of the subunit, while an extended beta-hairpin is found that lines the wall of the exit tunnel in the center of the 70S ribosome. The polypeptide is Large ribosomal subunit protein uL22 (Geobacillus stearothermophilus (Bacillus stearothermophilus)).